Reading from the N-terminus, the 387-residue chain is Putative purine permease 15 (387 aa).

Transmembrane regions (helical) follow at residues 44 to 64 (WVTI…ARLL), 84 to 104 (TLLQ…HFLI), 122 to 142 (LAIT…FSDV), 150 to 169 (VFTL…SKYY), 179 to 199 (FISL…FSAG), 210 to 230 (YGII…LCII), 252 to 272 (FVVV…ILVA), 306 to 326 (VAWQ…SAVF), 329 to 349 (VISV…YNTH), and 354 to 374 (VFRG…IYII).

The protein belongs to the purine permeases (TC 2.A.7.14) family.

The protein resides in the membrane. The protein is Putative purine permease 15 (PUP15) of Arabidopsis thaliana (Mouse-ear cress).